The following is a 94-amino-acid chain: DNA-directed RNA polymerase subunit omega (94 aa).

This sequence belongs to the RNA polymerase subunit omega family. The RNAP catalytic core consists of 2 alpha, 1 beta, 1 beta' and 1 omega subunit. When a sigma factor is associated with the core the holoenzyme is formed, which can initiate transcription.

It carries out the reaction RNA(n) + a ribonucleoside 5'-triphosphate = RNA(n+1) + diphosphate. In terms of biological role, promotes RNA polymerase assembly. Latches the N- and C-terminal regions of the beta' subunit thereby facilitating its interaction with the beta and alpha subunits. In Bifidobacterium longum (strain DJO10A), this protein is DNA-directed RNA polymerase subunit omega.